We begin with the raw amino-acid sequence, 457 residues long: Siroheme synthase (457 aa).

The interval 1-204 is precorrin-2 dehydrogenase /sirohydrochlorin ferrochelatase; the sequence is MDHLPIFCQL…ADAKAVSEIT (204 aa). NAD(+) is bound by residues 22-23 and 43-44; these read DV and LA. A Phosphoserine modification is found at Ser-128. Residues 216-457 form a uroporphyrinogen-III C-methyltransferase region; it reads GEVVLVGAGP…RDKLNWFSNH (242 aa). Pro-225 contributes to the S-adenosyl-L-methionine binding site. Catalysis depends on Asp-248, which acts as the Proton acceptor. Lys-270 serves as the catalytic Proton donor. S-adenosyl-L-methionine contacts are provided by residues 301 to 303, Ile-306, 331 to 332, Met-382, and Gly-411; these read GGD and TA.

In the N-terminal section; belongs to the precorrin-2 dehydrogenase / sirohydrochlorin ferrochelatase family. This sequence in the C-terminal section; belongs to the precorrin methyltransferase family.

The enzyme catalyses uroporphyrinogen III + 2 S-adenosyl-L-methionine = precorrin-2 + 2 S-adenosyl-L-homocysteine + H(+). It catalyses the reaction precorrin-2 + NAD(+) = sirohydrochlorin + NADH + 2 H(+). It carries out the reaction siroheme + 2 H(+) = sirohydrochlorin + Fe(2+). It participates in cofactor biosynthesis; adenosylcobalamin biosynthesis; precorrin-2 from uroporphyrinogen III: step 1/1. The protein operates within cofactor biosynthesis; adenosylcobalamin biosynthesis; sirohydrochlorin from precorrin-2: step 1/1. Its pathway is porphyrin-containing compound metabolism; siroheme biosynthesis; precorrin-2 from uroporphyrinogen III: step 1/1. It functions in the pathway porphyrin-containing compound metabolism; siroheme biosynthesis; siroheme from sirohydrochlorin: step 1/1. It participates in porphyrin-containing compound metabolism; siroheme biosynthesis; sirohydrochlorin from precorrin-2: step 1/1. In terms of biological role, multifunctional enzyme that catalyzes the SAM-dependent methylations of uroporphyrinogen III at position C-2 and C-7 to form precorrin-2 via precorrin-1. Then it catalyzes the NAD-dependent ring dehydrogenation of precorrin-2 to yield sirohydrochlorin. Finally, it catalyzes the ferrochelation of sirohydrochlorin to yield siroheme. The chain is Siroheme synthase from Citrobacter koseri (strain ATCC BAA-895 / CDC 4225-83 / SGSC4696).